Reading from the N-terminus, the 214-residue chain is MSGYFITFEGGEGVGKTTQISLLAQYLRNQGYDVLTTREPGGTVGAEAIRHILLSGQAQNYGPLIEVILLTAARIDHITEVIAPSLQKGKIVLCDRFIDSTRVYQGLNNTVGSSVLSVLEYVALNGIMPCLTFLLDIPARCGMERANLRRKKAETIDYFEKDELKIQEQRRQAFLQLAKQEPHRFRVIDATGAMEVIAQQIKNICHQVILDQVP.

10–17 contributes to the ATP binding site; sequence GGEGVGKT.

It belongs to the thymidylate kinase family.

It catalyses the reaction dTMP + ATP = dTDP + ADP. Functionally, phosphorylation of dTMP to form dTDP in both de novo and salvage pathways of dTTP synthesis. This Bartonella quintana (strain Toulouse) (Rochalimaea quintana) protein is Thymidylate kinase.